The chain runs to 251 residues: uncharacterized protein (251 aa).

The N-terminal stretch at 1–25 is a signal peptide; the sequence is MRKKKFLSRFSFSSLFLLCGTLLSA. The N-palmitoyl cysteine moiety is linked to residue C26. C26 carries the S-diacylglycerol cysteine lipid modification.

The protein belongs to the MG439/MG440 family.

The protein resides in the cell membrane. This is an uncharacterized protein from Mycoplasma pneumoniae (strain ATCC 29342 / M129 / Subtype 1) (Mycoplasmoides pneumoniae).